We begin with the raw amino-acid sequence, 176 residues long: Acireductone dioxygenase (176 aa).

The Fe(2+) site is built by H91, H93, E97, and H136. 4 residues coordinate Ni(2+): H91, H93, E97, and H136.

This sequence belongs to the acireductone dioxygenase (ARD) family. Monomer. Fe(2+) serves as cofactor. The cofactor is Ni(2+).

The enzyme catalyses 1,2-dihydroxy-5-(methylsulfanyl)pent-1-en-3-one + O2 = 3-(methylsulfanyl)propanoate + CO + formate + 2 H(+). It catalyses the reaction 1,2-dihydroxy-5-(methylsulfanyl)pent-1-en-3-one + O2 = 4-methylsulfanyl-2-oxobutanoate + formate + 2 H(+). Its pathway is amino-acid biosynthesis; L-methionine biosynthesis via salvage pathway; L-methionine from S-methyl-5-thio-alpha-D-ribose 1-phosphate: step 5/6. In terms of biological role, catalyzes 2 different reactions between oxygen and the acireductone 1,2-dihydroxy-3-keto-5-methylthiopentene (DHK-MTPene) depending upon the metal bound in the active site. Fe-containing acireductone dioxygenase (Fe-ARD) produces formate and 2-keto-4-methylthiobutyrate (KMTB), the alpha-ketoacid precursor of methionine in the methionine recycle pathway. Ni-containing acireductone dioxygenase (Ni-ARD) produces methylthiopropionate, carbon monoxide and formate, and does not lie on the methionine recycle pathway. This chain is Acireductone dioxygenase, found in Picosynechococcus sp. (strain ATCC 27264 / PCC 7002 / PR-6) (Agmenellum quadruplicatum).